The chain runs to 143 residues: Spliceosomal protein DIB1 (143 aa).

An N-acetylalanine modification is found at alanine 2.

This sequence belongs to the DIM1 family. In terms of assembly, component of the U4/U6-U5 tri-snRNP complex composed of the U4, U6 and U5 snRNAs and at least PRP3, PRP4, PRP6, PRP8, PRP18, PRP31, PRP38, SNU13, SNU23, SNU66, SNU114, SPP381, SMB1, SMD1, SMD2, SMD3, SMX2, SMX3, LSM2, LSM3, LSM4, LSM5, LSM6, LSM7, LSM8, BRR2 and DIB1.

It is found in the nucleus. Functionally, essential role in pre-mRNA splicing. Also essential for entry into mitosis (G2/M progression) as well as for chromosome segregation during mitosis. The polypeptide is Spliceosomal protein DIB1 (DIB1) (Saccharomyces cerevisiae (strain ATCC 204508 / S288c) (Baker's yeast)).